A 51-amino-acid chain; its full sequence is Large ribosomal subunit protein eL39 (51 aa).

Positions 1-23 (MPSQKSFRTKQKLAKAQKQNRPL) are disordered.

The protein belongs to the eukaryotic ribosomal protein eL39 family. In terms of assembly, component of the large ribosomal subunit. Mature ribosomes consist of a small (40S) and a large (60S) subunit. The 40S subunit contains about 32 different proteins and 1 molecule of RNA (18S). The 60S subunit contains 45 different proteins and 3 molecules of RNA (25S, 5.8S and 5S).

The protein localises to the cytoplasm. Its function is as follows. Component of the ribosome, a large ribonucleoprotein complex responsible for the synthesis of proteins in the cell. The small ribosomal subunit (SSU) binds messenger RNAs (mRNAs) and translates the encoded message by selecting cognate aminoacyl-transfer RNA (tRNA) molecules. The large subunit (LSU) contains the ribosomal catalytic site termed the peptidyl transferase center (PTC), which catalyzes the formation of peptide bonds, thereby polymerizing the amino acids delivered by tRNAs into a polypeptide chain. The nascent polypeptides leave the ribosome through a tunnel in the LSU and interact with protein factors that function in enzymatic processing, targeting, and the membrane insertion of nascent chains at the exit of the ribosomal tunnel. The chain is Large ribosomal subunit protein eL39 from Candida albicans (strain SC5314 / ATCC MYA-2876) (Yeast).